A 78-amino-acid chain; its full sequence is Acyl carrier protein AcpP (78 aa).

In terms of domain architecture, Carrier spans 2-77; sequence SDIAERVKKI…DAVKFIEKAQ (76 aa). Position 37 is an O-(pantetheine 4'-phosphoryl)serine (Ser-37).

It belongs to the acyl carrier protein (ACP) family. 4'-phosphopantetheine is transferred from CoA to a specific serine of apo-ACP by AcpS. This modification is essential for activity because fatty acids are bound in thioester linkage to the sulfhydryl of the prosthetic group.

The protein localises to the cytoplasm. Its pathway is lipid metabolism; fatty acid biosynthesis. Its function is as follows. Carrier of the growing fatty acid chain in fatty acid biosynthesis. The protein is Acyl carrier protein AcpP of Agrobacterium fabrum (strain C58 / ATCC 33970) (Agrobacterium tumefaciens (strain C58)).